Consider the following 602-residue polypeptide: Sulfite reductase [NADPH] hemoprotein beta-component (602 aa).

Residues 1 to 15 are compositionally biased toward basic and acidic residues; that stretch reads MDDHKTASPPRERSY. The interval 1-24 is disordered; it reads MDDHKTASPPRERSYETPPAERPI. [4Fe-4S] cluster contacts are provided by C458, C464, C503, and C507. Residue C507 coordinates siroheme.

It belongs to the nitrite and sulfite reductase 4Fe-4S domain family. Alpha(8)-beta(8). The alpha component is a flavoprotein, the beta component is a hemoprotein. It depends on siroheme as a cofactor. Requires [4Fe-4S] cluster as cofactor.

It carries out the reaction hydrogen sulfide + 3 NADP(+) + 3 H2O = sulfite + 3 NADPH + 4 H(+). Its pathway is sulfur metabolism; hydrogen sulfide biosynthesis; hydrogen sulfide from sulfite (NADPH route): step 1/1. In terms of biological role, component of the sulfite reductase complex that catalyzes the 6-electron reduction of sulfite to sulfide. This is one of several activities required for the biosynthesis of L-cysteine from sulfate. This Methylobacterium nodulans (strain LMG 21967 / CNCM I-2342 / ORS 2060) protein is Sulfite reductase [NADPH] hemoprotein beta-component.